The primary structure comprises 309 residues: Malate dehydrogenase (309 aa).

Residues 6 to 11 and aspartate 31 each bind NAD(+); that span reads GSGRVG. 2 residues coordinate substrate: arginine 80 and arginine 86. NAD(+)-binding positions include asparagine 93 and 116–118; that span reads TTN. Substrate-binding residues include asparagine 118 and arginine 149. Residue histidine 173 is the Proton acceptor of the active site.

This sequence belongs to the LDH/MDH superfamily. Homotetramer.

It carries out the reaction (S)-malate + NAD(+) = oxaloacetate + NADH + H(+). Catalyzes the reversible oxidation of malate to oxaloacetate. Exhibits higher specific activity for oxaloacetate reduction than for malate oxidation in vitro. Has a strong preference for NAD. Can use NADPH for oxaloacetate reduction, but activity decreases more than 90%. No activity detected with NADP(+) and malate. The protein is Malate dehydrogenase of Pyrobaculum islandicum (strain DSM 4184 / JCM 9189 / GEO3).